An 85-amino-acid chain; its full sequence is Protein AC4 (85 aa).

G2 carries the N-myristoyl glycine; by host lipid modification. The interval R44–C63 is disordered. Residues P46 to D62 show a composition bias toward polar residues.

Belongs to the geminiviridae protein AC4/C4 family.

It is found in the host cell membrane. Its function is as follows. Pathogenicity determinant. May act as a suppressor of RNA-mediated gene silencing, also known as post-transcriptional gene silencing (PTGS), a mechanism of plant viral defense that limits the accumulation of viral RNAs. This Potato yellow mosaic virus (isolate Venezuela) (PYMV) protein is Protein AC4.